The chain runs to 208 residues: Small ribosomal subunit protein uS4 (208 aa).

The interval 30 to 51 is disordered; that stretch reads KSSLEKRPYAPGQHGQRRSKIS. Residues 98–161 form the S4 RNA-binding domain; the sequence is RRLDNVVYRM…KNNPQVQRSI (64 aa).

This sequence belongs to the universal ribosomal protein uS4 family. As to quaternary structure, part of the 30S ribosomal subunit. Contacts protein S5. The interaction surface between S4 and S5 is involved in control of translational fidelity.

In terms of biological role, one of the primary rRNA binding proteins, it binds directly to 16S rRNA where it nucleates assembly of the body of the 30S subunit. Functionally, with S5 and S12 plays an important role in translational accuracy. The sequence is that of Small ribosomal subunit protein uS4 from Wolinella succinogenes (strain ATCC 29543 / DSM 1740 / CCUG 13145 / JCM 31913 / LMG 7466 / NCTC 11488 / FDC 602W) (Vibrio succinogenes).